Here is a 1198-residue protein sequence, read N- to C-terminus: MTRSFRVEWTDGRKMADDKSNSIGDNSTNKRLWSSSIRGSALIFICALLAEPARATTHWVVTEDGKIQQQVDSPLNLKHPHHLVLFMQQETRVNYLKKLEKQLVAQKIHIEENEDRDTGLEQRHYKEDADCVTAKVPLGDLDLYDGTFISLESKDINPEQFLDLMSALPPDLEKPDCAKLLDLPYSIHAFQHLRGVQEKVNLTSPLLSKDDPIFTSLCLKLGQSVDEVGHRIHQALLKNSSSWVLYNLASFYWRIKNEPRRAVDCVVRALHFSPRQHKDVALVNMANVLHRAHFSADAAILAHAALDLTTDLLTSHYTLGNIYAMLGEYNHSVLCYEQALQAQPGFEQALRRKHAVLCQQKLEQRLEAQHRSLQRTLNELKEYQKQHDHYLRQQEMLDKHKLIQEEQILRNIIHETQMAKEAQLGNHQMCHMGQQKFTLHCPFDLPVRYHRGELFENVHYIQFGEEVSVASSVALVSELSVNESHSPQQSYTVSLGREPAAHWDKETTTTDESRTVLWPRRSDCAQRFPTIPPAYLLPTYYLPPESRNLKALNILLESISPPPSAKMPDCSLKNVVGNRDPLESMSWALEKELRDPQAAEVLLKRSGGRSLEQTGALIAQALEKMSGPRWMMQNEAGLFWRAKGNGTQALVCLRQALHSAPPQHRDLPLVNTANLLLHYGLHSEAHELLQQALQINQSEPHTLLSLVNVHLSQGNLTGALAVFRQALSLSVHCGQCRASLPLMRCLQFYPFLYNLQHQACSSGGACEVEEDSELEDWDTGSSSSGRQEVWDSDAMPVSALEDSLLFEKVVVDSNGSGEASGQDRTREPKAEGGEEEEQDWRLREELIGAFEGALDMNGKTGDLRGIRVLKNDRVMGARGGGPCFGNCEDDEGAEWITFQVKRVKKPKSDASEGWVGEGDVRQTEPTASNSILEISGPTIPSPGPSERWKDYSSLGWPGPEECQRTRRVDLTTVASTWLAVSAKNIDITEHIDFATPLQEPAVEPVCNANLPASMHTLDHLSGVANRGGIHYTGESQLREVLQNLGKDKFPSQSFEQVGTRIAKVLEKNQTSWVLSSMAALYWRVKGQGKRAIDCLRQALNYAPHHMKDVPLISLANIFQNARLWEDALTVARMAVEIAPHFVVNHFTLANVYIAMEEFEKAMHWYESTLKLQPEFGPAKDRLRTIQCYLLSKRDRRAP.

A TPR 1 repeat occupies 313 to 346 (LTSHYTLGNIYAMLGEYNHSVLCYEQALQAQPGF). Residues 358–399 (CQQKLEQRLEAQHRSLQRTLNELKEYQKQHDHYLRQQEMLDK) are a coiled coil. TPR repeat units lie at residues 630-663 (WMMQNEAGLFWRAKGNGTQALVCLRQALHSAPPQ) and 700-733 (PHTLLSLVNVHLSQGNLTGALAVFRQALSLSVHC). 2 disordered regions span residues 771–792 (DSELEDWDTGSSSSGRQEVWDS) and 814–839 (NGSGEASGQDRTREPKAEGGEEEEQD). The segment covering 821 to 832 (GQDRTREPKAEG) has biased composition (basic and acidic residues). TPR repeat units follow at residues 1071-1105 (SWVLSSMAALYWRVKGQGKRAIDCLRQALNYAPHH), 1108-1141 (DVPLISLANIFQNARLWEDALTVARMAVEIAPHF), and 1142-1175 (VVNHFTLANVYIAMEEFEKAMHWYESTLKLQPEF).

This sequence belongs to the TTC17 family.

The protein resides in the cytoplasm. It is found in the cell membrane. The protein localises to the cytoskeleton. Plays a role in primary ciliogenesis by modulating actin polymerization. This Danio rerio (Zebrafish) protein is Tetratricopeptide repeat protein 17 (ttc17).